The sequence spans 128 residues: Riboflavin kinase (128 aa).

Residue glycine 12–lysine 17 participates in CDP binding. Residues threonine 41 and asparagine 43 each contribute to the Mg(2+) site. 2 residues coordinate FMN: threonine 97 and glutamate 105. CDP is bound at residue isoleucine 110–arginine 113.

This sequence belongs to the archaeal riboflavin kinase family. The cofactor is Mg(2+).

It carries out the reaction riboflavin + CTP = CDP + FMN + H(+). It participates in cofactor biosynthesis; FMN biosynthesis; FMN from riboflavin (CTP route): step 1/1. Functionally, catalyzes the CTP-dependent phosphorylation of riboflavin (vitamin B2) to form flavin mononucleotide (FMN). The protein is Riboflavin kinase of Methanococcus aeolicus (strain ATCC BAA-1280 / DSM 17508 / OCM 812 / Nankai-3).